The following is a 219-amino-acid chain: Claudin-6 (219 aa).

Topologically, residues 1–7 (MASTGLQ) are cytoplasmic. Residues 8–28 (ILGIVLTLLGWVNALVSCALP) traverse the membrane as a helical segment. The Extracellular portion of the chain corresponds to 29-81 (MWKVTAFIGNSIVVAQMVWEGLWMSCVVQSTGQMQCKVYDSLLALPQDLQAAR). A helical transmembrane segment spans residues 82-102 (ALCVVTLLIVLLGLLVYLAGA). Over 103-116 (KCTTCVEDRNSKSR) the chain is Cytoplasmic. Residues 117-137 (LVLISGIIFVISGVLTLIPVC) traverse the membrane as a helical segment. Residues 138–163 (WTAHSIIQDFYNPLVADAQKRELGAS) are Extracellular-facing. The helical transmembrane segment at 164–184 (LYLGWAASGLLLLGGGLLCCA) threads the bilayer. At 185 to 219 (CSSGGTQGPRHYMACYSTSVPHSRGPSEYPTKNYV) the chain is on the cytoplasmic side. A phosphoserine mark is found at S201, S203, S207, and S211. Residues 218–219 (YV) are interactions with TJP1, TJP2 and TJP3.

This sequence belongs to the claudin family. Directly interacts with TJP1/ZO-1, TJP2/ZO-2 and TJP3/ZO-3. Interacts with CLDN1, CD81 and OCLN. Expressed mostly in embryonic tissues.

It is found in the cell junction. It localises to the tight junction. The protein localises to the cell membrane. Its function is as follows. Plays a major role in tight junction-specific obliteration of the intercellular space, through calcium-independent cell-adhesion activity. This is Claudin-6 (Cldn6) from Mus musculus (Mouse).